The following is a 164-amino-acid chain: 2-C-methyl-D-erythritol 2,4-cyclodiphosphate synthase (164 aa).

Residues Asp-9 and His-11 each contribute to the a divalent metal cation site. Residues 9–11 (DAH) and 36–37 (HS) contribute to the 4-CDP-2-C-methyl-D-erythritol 2-phosphate site. His-44 is a binding site for a divalent metal cation. Residues 58-60 (DLG), 63-67 (FPDSD), 134-137 (TTTE), Phe-141, and Arg-144 each bind 4-CDP-2-C-methyl-D-erythritol 2-phosphate.

Belongs to the IspF family. As to quaternary structure, homotrimer. A divalent metal cation serves as cofactor.

It catalyses the reaction 4-CDP-2-C-methyl-D-erythritol 2-phosphate = 2-C-methyl-D-erythritol 2,4-cyclic diphosphate + CMP. It participates in isoprenoid biosynthesis; isopentenyl diphosphate biosynthesis via DXP pathway; isopentenyl diphosphate from 1-deoxy-D-xylulose 5-phosphate: step 4/6. Functionally, involved in the biosynthesis of isopentenyl diphosphate (IPP) and dimethylallyl diphosphate (DMAPP), two major building blocks of isoprenoid compounds. Catalyzes the conversion of 4-diphosphocytidyl-2-C-methyl-D-erythritol 2-phosphate (CDP-ME2P) to 2-C-methyl-D-erythritol 2,4-cyclodiphosphate (ME-CPP) with a corresponding release of cytidine 5-monophosphate (CMP). The chain is 2-C-methyl-D-erythritol 2,4-cyclodiphosphate synthase from Alkalilimnicola ehrlichii (strain ATCC BAA-1101 / DSM 17681 / MLHE-1).